Consider the following 837-residue polypeptide: Protein translocase subunit SecA 1 (837 aa).

ATP-binding positions include Q85, 103–107 (GEGKT), and D492. Residues 787 to 806 (QEVAKGEAVHPKEDGEEPKK) show a composition bias toward basic and acidic residues. Residues 787–813 (QEVAKGEAVHPKEDGEEPKKKPIRKAV) form a disordered region. Residues C821, C823, C832, and C833 each contribute to the Zn(2+) site.

The protein belongs to the SecA family. In terms of assembly, monomer and homodimer. Part of the essential Sec protein translocation apparatus which comprises SecA, SecYEG and auxiliary proteins SecDF. Other proteins may also be involved. Requires Zn(2+) as cofactor.

It is found in the cell membrane. The protein resides in the cytoplasm. The enzyme catalyses ATP + H2O + cellular proteinSide 1 = ADP + phosphate + cellular proteinSide 2.. Functionally, part of the Sec protein translocase complex. Interacts with the SecYEG preprotein conducting channel. Has a central role in coupling the hydrolysis of ATP to the transfer of proteins into and across the cell membrane, serving as an ATP-driven molecular motor driving the stepwise translocation of polypeptide chains across the membrane. This chain is Protein translocase subunit SecA 1, found in Geobacillus thermodenitrificans (strain NG80-2).